The primary structure comprises 351 residues: Glycerol-3-phosphate dehydrogenase 1-like protein (351 aa).

Position 12-17 (12-17 (GSGNWG)) interacts with NAD(+). Lysine 122 provides a ligand contact to substrate. Alanine 155 contributes to the NAD(+) binding site. Residue lysine 206 is the Proton acceptor of the active site. Residues arginine 271, lysine 298, and glutamine 300 each contribute to the NAD(+) site. 271–272 (RN) lines the substrate pocket.

The protein belongs to the NAD-dependent glycerol-3-phosphate dehydrogenase family. In terms of assembly, interacts with SCN5A.

Its subcellular location is the cytoplasm. The enzyme catalyses sn-glycerol 3-phosphate + NAD(+) = dihydroxyacetone phosphate + NADH + H(+). Plays a role in regulating cardiac sodium current; decreased enzymatic activity with resulting increased levels of glycerol 3-phosphate activating the DPD1L-dependent SCN5A phosphorylation pathway, may ultimately lead to decreased sodium current; cardiac sodium current may also be reduced due to alterations of NAD(H) balance induced by DPD1L. This Mus musculus (Mouse) protein is Glycerol-3-phosphate dehydrogenase 1-like protein (Gpd1l).